A 349-amino-acid chain; its full sequence is Glycerol-1-phosphate dehydrogenase [NAD(P)+] (349 aa).

Residues 95-99 and 117-120 contribute to the NAD(+) site; these read GKSID and TSPS. Residue D122 participates in substrate binding. S126 is a binding site for NAD(+). D169 lines the substrate pocket. 2 residues coordinate Zn(2+): D169 and H249. H253 is a binding site for substrate. Position 265 (H265) interacts with Zn(2+).

This sequence belongs to the glycerol-1-phosphate dehydrogenase family. Homodimer. Zn(2+) serves as cofactor.

It is found in the cytoplasm. The catalysed reaction is sn-glycerol 1-phosphate + NAD(+) = dihydroxyacetone phosphate + NADH + H(+). It catalyses the reaction sn-glycerol 1-phosphate + NADP(+) = dihydroxyacetone phosphate + NADPH + H(+). Its pathway is membrane lipid metabolism; glycerophospholipid metabolism. Functionally, catalyzes the NAD(P)H-dependent reduction of dihydroxyacetonephosphate (DHAP or glycerone phosphate) to glycerol 1-phosphate (G1P). The G1P thus generated is used as the glycerophosphate backbone of phospholipids in the cellular membranes of Archaea. The sequence is that of Glycerol-1-phosphate dehydrogenase [NAD(P)+] from Hyperthermus butylicus (strain DSM 5456 / JCM 9403 / PLM1-5).